Reading from the N-terminus, the 197-residue chain is MGGKLSKKKKGYNVNDEKAKEKDAKTEGASAEESEAPKENKEDAAAATETTNDTAAAAKEATPTADSNSTAPKEEEKSAAPPKKEEPAANANANAPKASDAKTSEAAKAEPAKSPDAPPVKAEEKSAPSAAPANEKEPAKEAAKDPAPAVAAASESKPDAESKKTEAPPTKESAPAEPITTETSPAPNKEQAVAVQD.

Basic residues predominate over residues 1–11; it reads MGGKLSKKKKG. Positions 1 to 197 are disordered; the sequence is MGGKLSKKKK…NKEQAVAVQD (197 aa). G2 carries the N-myristoyl glycine lipid modification. Composition is skewed to basic and acidic residues over residues 15–26 and 35–44; these read NDEKAKEKDAKT and EAPKENKEDA. The segment covering 45-66 has biased composition (low complexity); sequence AAATETTNDTAAAAKEATPTAD. Positions 72-87 are enriched in basic and acidic residues; sequence PKEEEKSAAPPKKEEP. The segment covering 88–98 has biased composition (low complexity); the sequence is AANANANAPKA. Basic and acidic residues-rich tracts occupy residues 99–113 and 134–144; these read SDAKTSEAAKAEPAK and NEKEPAKEAAK. The segment covering 145–155 has biased composition (low complexity); sequence DPAPAVAAASE. Positions 156–166 are enriched in basic and acidic residues; sequence SKPDAESKKTE.

Belongs to the BASP1 family.

The protein localises to the cell membrane. The protein is Brain acid soluble protein 1 homolog (basp1) of Danio rerio (Zebrafish).